The primary structure comprises 418 residues: Sialidase-3 (418 aa).

Residues 24-27 carry the FRIP motif motif; sequence YRIP. Residues Arg25 and Arg45 each coordinate substrate. Asp50 functions as the Proton acceptor in the catalytic mechanism. The stretch at 129–140 is one BNR 1 repeat; the sequence is LYSEDSGCSWGE. The substrate site is built by Tyr179 and Tyr181. One copy of the BNR 2 repeat lies at 201–212; the sequence is FYSDDLGVTWHC. Substrate contacts are provided by Glu223 and Arg243. The stretch at 252–263 is one BNR 3 repeat; the sequence is AFSTDSGDCFQK. A substrate-binding site is contributed by Arg339. The active-site Nucleophile is the Tyr369. Residue Glu386 is part of the active site.

Belongs to the glycosyl hydrolase 33 family. Interacts with CAV1; this interaction enhances NEU3 sialidase activity within caveola. Interacts with EGFR; this interaction mediates desialylation of EGFR enhancing downstream signaling. Post-translationally, palmitoylated; may regulate intracellular trafficking and anchorage to plasma membrane and endomembranes. In terms of tissue distribution, expressed in brain, cardiac muscle and weakly in liver.

Its subcellular location is the cell membrane. The protein resides in the membrane. The protein localises to the caveola. It is found in the early endosome membrane. It localises to the recycling endosome membrane. Its subcellular location is the lysosome membrane. It catalyses the reaction Hydrolysis of alpha-(2-&gt;3)-, alpha-(2-&gt;6)-, alpha-(2-&gt;8)- glycosidic linkages of terminal sialic acid residues in oligosaccharides, glycoproteins, glycolipids, colominic acid and synthetic substrates.. It carries out the reaction a ganglioside GD1a + H2O = a ganglioside GM1 + N-acetylneuraminate. The enzyme catalyses a ganglioside GD1a (d18:1(4E)) + H2O = a ganglioside GM1 (d18:1(4E)) + N-acetylneuraminate. The catalysed reaction is a ganglioside GD1b + H2O = a ganglioside GM1 + N-acetylneuraminate. It catalyses the reaction a ganglioside GD1b (d18:1(4E)) + H2O = a ganglioside GM1 (d18:1(4E)) + N-acetylneuraminate. It carries out the reaction a ganglioside GD3 + H2O = a ganglioside GM3 + N-acetylneuraminate. The enzyme catalyses a ganglioside GD3 (d18:1(4E)) + H2O = a ganglioside GM3 (d18:1(4E)) + N-acetylneuraminate. The catalysed reaction is a ganglioside GM3 + H2O = a beta-D-galactosyl-(1-&gt;4)-beta-D-glucosyl-(1&lt;-&gt;1)-ceramide + N-acetylneuraminate. It catalyses the reaction a ganglioside GM1 + H2O = a ganglioside GA1 + N-acetylneuraminate. It carries out the reaction a ganglioside GM1 (d18:1(4E)) + H2O = a ganglioside GA1 (d18:1(4E)) + N-acetylneuraminate. The enzyme catalyses a ganglioside GM2 (d18:1(4E)) + H2O = a ganglioside GA2 (d18:1(4E)) + N-acetylneuraminate. The catalysed reaction is a ganglioside GM3 (d18:1(4E)) + H2O = a beta-D-Gal-(1-&gt;4)-beta-D-Glc-(1&lt;-&gt;1)-Cer(d18:1(4E)) + N-acetylneuraminate. It catalyses the reaction a ganglioside GT1b + H2O = a ganglioside GD1b + N-acetylneuraminate. Its function is as follows. Exo-alpha-sialidase that catalyzes the hydrolytic cleavage of the terminal sialic acid (N-acetylneuraminic acid, Neu5Ac) of a glycan moiety in the catabolism of glycolipids, glycoproteins and oligosacharides. Displays high catalytic efficiency for gangliosides including alpha-(2-&gt;3)-sialylated GD1a and GM3 and alpha-(2-&gt;8)-sialylated GD3. Plays a role in the regulation of transmembrane signaling through the modulation of ganglioside content of the lipid bilayer and by direct interaction with signaling receptors, such as EGFR. Desialylates EGFR and activates downstream signaling in proliferating cells. Contributes to clathrin-mediated endocytosis by regulating sorting of endocytosed receptors to early and recycling endosomes. The chain is Sialidase-3 (Neu3) from Rattus norvegicus (Rat).